A 1025-amino-acid chain; its full sequence is Multidrug resistance protein MdtC (1025 aa).

The next 12 helical transmembrane spans lie at 3–23 (FFALFIYRPVATILLSVAITL), 333–353 (EVEQTLIISVALVILVVFLFL), 360–380 (IIPAVAVPVSLIGTFAAMYLC), 387–407 (LSLMALTIATGFVVDDAIVVL), 431–451 (VGFTVLSMSLSLVAVFLPLLL), 463–483 (FAVTLSVAIGISLLVSLTLTP), 528–548 (LVGVVLLGTIALNIWLYISIP), 853–873 (VILIIAAIATVYIVLGILYES), 875–895 (VHPLTILSTLPSAGVGALLAL), 897–917 (LFNAPFSLIALIGIMLLIGIV), 953–973 (PIMMTTLAALFGALPLVLSGG), and 984–1004 (ITIVGGLVMSQLLTLYTTPVV).

This sequence belongs to the resistance-nodulation-cell division (RND) (TC 2.A.6) family. MdtC subfamily. In terms of assembly, part of a tripartite efflux system composed of MdtA, MdtB and MdtC. MdtC forms a heteromultimer with MdtB.

The protein resides in the cell inner membrane. In terms of biological role, the MdtABC tripartite complex confers resistance against novobiocin and deoxycholate. This Escherichia coli O17:K52:H18 (strain UMN026 / ExPEC) protein is Multidrug resistance protein MdtC.